The chain runs to 399 residues: Tryptophan synthase beta chain (399 aa).

Residue Lys92 is modified to N6-(pyridoxal phosphate)lysine.

Belongs to the TrpB family. As to quaternary structure, tetramer of two alpha and two beta chains. Requires pyridoxal 5'-phosphate as cofactor.

The enzyme catalyses (1S,2R)-1-C-(indol-3-yl)glycerol 3-phosphate + L-serine = D-glyceraldehyde 3-phosphate + L-tryptophan + H2O. Its pathway is amino-acid biosynthesis; L-tryptophan biosynthesis; L-tryptophan from chorismate: step 5/5. In terms of biological role, the beta subunit is responsible for the synthesis of L-tryptophan from indole and L-serine. This Nitrosomonas eutropha (strain DSM 101675 / C91 / Nm57) protein is Tryptophan synthase beta chain.